A 480-amino-acid polypeptide reads, in one-letter code: Glutamyl-tRNA(Gln) amidotransferase subunit A (480 aa).

Residues lysine 74 and serine 149 each act as charge relay system in the active site. The active-site Acyl-ester intermediate is serine 173.

This sequence belongs to the amidase family. GatA subfamily. Heterotrimer of A, B and C subunits.

The catalysed reaction is L-glutamyl-tRNA(Gln) + L-glutamine + ATP + H2O = L-glutaminyl-tRNA(Gln) + L-glutamate + ADP + phosphate + H(+). In terms of biological role, allows the formation of correctly charged Gln-tRNA(Gln) through the transamidation of misacylated Glu-tRNA(Gln) in organisms which lack glutaminyl-tRNA synthetase. The reaction takes place in the presence of glutamine and ATP through an activated gamma-phospho-Glu-tRNA(Gln). This chain is Glutamyl-tRNA(Gln) amidotransferase subunit A, found in Ruthia magnifica subsp. Calyptogena magnifica.